Consider the following 376-residue polypeptide: Chaperone protein DnaJ (376 aa).

One can recognise a J domain in the interval 4–68 (DYYEILGVAR…ETRARYDRFG (65 aa)). The disordered stretch occupies residues 102-121 (GGMGGPTQQRRRGGPARGDD). The CR-type zinc-finger motif lies at 136-218 (GGEKEIRISH…CDGKGTNQVT (83 aa)). 8 residues coordinate Zn(2+): cysteine 149, cysteine 152, cysteine 166, cysteine 169, cysteine 192, cysteine 195, cysteine 206, and cysteine 209. CXXCXGXG motif repeat units follow at residues 149–156 (CETCSGSG), 166–173 (CSTCSGSG), 192–199 (CPTCNGTG), and 206–213 (CDACDGKG).

This sequence belongs to the DnaJ family. Homodimer. The cofactor is Zn(2+).

The protein resides in the cytoplasm. Its function is as follows. Participates actively in the response to hyperosmotic and heat shock by preventing the aggregation of stress-denatured proteins and by disaggregating proteins, also in an autonomous, DnaK-independent fashion. Unfolded proteins bind initially to DnaJ; upon interaction with the DnaJ-bound protein, DnaK hydrolyzes its bound ATP, resulting in the formation of a stable complex. GrpE releases ADP from DnaK; ATP binding to DnaK triggers the release of the substrate protein, thus completing the reaction cycle. Several rounds of ATP-dependent interactions between DnaJ, DnaK and GrpE are required for fully efficient folding. Also involved, together with DnaK and GrpE, in the DNA replication of plasmids through activation of initiation proteins. The polypeptide is Chaperone protein DnaJ (Trichormus variabilis (strain ATCC 29413 / PCC 7937) (Anabaena variabilis)).